A 412-amino-acid polypeptide reads, in one-letter code: Poly-beta-1,6-N-acetyl-D-glucosamine synthase (412 aa).

The next 4 helical transmembrane spans lie at 6–28 (FLLF…FYFT), 290–312 (LYIL…LYLG), 332–354 (IFLL…ALFI), and 366–388 (LIFV…LVAF).

It belongs to the glycosyltransferase 2 family.

The protein resides in the cell membrane. Its function is as follows. N-acetylglucosaminyltransferase that catalyzes the polymerization of single monomer units of UDP-N-acetylglucosamine to produce the linear homomer poly-beta-1,6-N-acetyl-D-glucosamine (PNAG, also referred to as PIA), a biofilm adhesin polysaccharide. Requires IcaD for full activity. The sequence is that of Poly-beta-1,6-N-acetyl-D-glucosamine synthase (icaA) from Staphylococcus aureus (strain MSSA476).